The sequence spans 774 residues: MTKIYPLMPLRDIVIFPHMVAPLVVGREKSIRALEDAMEKKTEIFLVTQLEPTCEDPNEGEIYQCGTLSTVMQLLRLPDGTIKALVEGQRRARIVSRVPHEEFMQVEVEECTEVLPGQDELIAYERELRKAFQQFAHLGKKIGEEVVVSCSSIEDPVKLANVICSHLPLSSKEKQEVLEVETLGGRIELLLEILFRELQLAEVERKINIKVKQKLSRAQRDYYLGEKIREMQKEIGQGEDGVDEMTELENIIKAKKMPAYARARVQKELKKLRGMPAMSAETTVVRSYIDTILGLPWKKRSKGQLNVLKAEGILNKDHYGLEKPKERILEFLAVQSQVAKLKGPILCFVGPPGVGKTSICQSIAKSMGREFARLSLGGLRDEAEIRGHRRTYVGAMAGKVLRAMQKVGVANPVFCLDEIDKMSTDFRGDPAAALLEVLDPEQNSSFNDHYLDLDYDLSQVFFITTANSLEGIPIPLQDRMEIIQLSGYTEEDKQVIAEKYLLPKQLKANGFQKDDIFLSPGAMLTVVRHYTREAGVRGLERVLASLCRKVARDRLQKGKKSKKYRIGEKSVPTYLGTPKYRYGLAEERDEVGLATGLAWTQVGGVLLQIEVILMPGKGKLTLTGQLGDVMQESAQAAYSYIRSRAKELKLEPDFYEKVDIHVHVPEGAIPKDGPSAGITIATTLASALTGRPIRHELAMTGEITLRGRVLPIGGLTEKLLAAKRGNITKVLLPEENGRDLKDVPAKIKNALDIKLVSHMDQVLEQALLSKGKNK.

Residues 5–198 enclose the Lon N-terminal domain; the sequence is YPLMPLRDIV…LLLEILFREL (194 aa). Position 350-357 (350-357) interacts with ATP; it reads GPPGVGKT. The region spanning 588 to 769 is the Lon proteolytic domain; it reads RDEVGLATGL…DQVLEQALLS (182 aa). Residues serine 675 and lysine 718 contribute to the active site.

Belongs to the peptidase S16 family. In terms of assembly, homohexamer. Organized in a ring with a central cavity.

It is found in the cytoplasm. It catalyses the reaction Hydrolysis of proteins in presence of ATP.. Functionally, ATP-dependent serine protease that mediates the selective degradation of mutant and abnormal proteins as well as certain short-lived regulatory proteins. Required for cellular homeostasis and for survival from DNA damage and developmental changes induced by stress. Degrades polypeptides processively to yield small peptide fragments that are 5 to 10 amino acids long. Binds to DNA in a double-stranded, site-specific manner. In Desulfotalea psychrophila (strain LSv54 / DSM 12343), this protein is Lon protease 2.